A 356-amino-acid polypeptide reads, in one-letter code: Stomatin-like protein 2, mitochondrial (356 aa).

The transit peptide at 1–28 (MLARAARGTGALLLKGSVQASARAPRRA) directs the protein to the mitochondrion. Ser17 is modified (phosphoserine; by PKC/PRKCZ). Tyr124 is subject to Phosphotyrosine. An N6-acetyllysine; alternate modification is found at Lys145. An N6-succinyllysine; alternate modification is found at Lys145. Residues 215 to 252 (INVAEGKKQAQILASEAEKAEQINQAAGEASAVLAKAK) adopt a coiled-coil conformation. Lys233 is subject to N6-acetyllysine. A disordered region spans residues 326 to 356 (EAQDSVSSRSSRDVRSTDASLDEELDRVKLS). Residue Ser330 is modified to Phosphoserine.

The protein belongs to the band 7/mec-2 family. As to quaternary structure, forms homooligomers. Interacts with MFN2; may form heterooligomers with this mediator of mitochondrial fusion. Interacts with PHB1 and PHB2; stabilizes and recruits them to cardiolipin-enriched mitochondrial membranes. Interacts with CACNA2D2.

It is found in the cell membrane. It localises to the mitochondrion. The protein localises to the mitochondrion inner membrane. Its subcellular location is the mitochondrion intermembrane space. The protein resides in the membrane raft. It is found in the cytoplasm. It localises to the cytoskeleton. Functionally, mitochondrial protein that probably regulates the biogenesis and the activity of mitochondria. Stimulates cardiolipin biosynthesis, binds cardiolipin-enriched membranes where it recruits and stabilizes some proteins including prohibitin and may therefore act in the organization of functional microdomains in mitochondrial membranes. Through regulation of the mitochondrial function may play a role into several biological processes including cell migration, cell proliferation, T-cell activation, calcium homeostasis and cellular response to stress. May play a role in calcium homeostasis through negative regulation of calcium efflux from mitochondria. Required for mitochondrial hyperfusion a pro-survival cellular response to stress which results in increased ATP production by mitochondria. May also regulate the organization of functional domains at the plasma membrane and play a role in T-cell activation through association with the T-cell receptor signaling complex and its regulation. In Bos taurus (Bovine), this protein is Stomatin-like protein 2, mitochondrial (STOML2).